Consider the following 311-residue polypeptide: tRNA pseudouridine synthase B (311 aa).

Residue Asp49 is the Nucleophile of the active site.

This sequence belongs to the pseudouridine synthase TruB family. Type 1 subfamily.

It catalyses the reaction uridine(55) in tRNA = pseudouridine(55) in tRNA. Responsible for synthesis of pseudouridine from uracil-55 in the psi GC loop of transfer RNAs. The sequence is that of tRNA pseudouridine synthase B from Rhizobium meliloti (strain 1021) (Ensifer meliloti).